The primary structure comprises 546 residues: uncharacterized protein (546 aa).

It belongs to the IIV-6 098R family.

This is an uncharacterized protein from Aedes vexans (Inland floodwater mosquito).